We begin with the raw amino-acid sequence, 377 residues long: Carbamoyl phosphate synthase small chain (377 aa).

A CPSase region spans residues 1-186; that stretch reads MSTPALLVLA…LGKGFVTPDE (186 aa). Residues S47, G238, and G240 each contribute to the L-glutamine site. The Glutamine amidotransferase type-1 domain maps to 190–377; the sequence is HVVAYDFGVK…IGNMKAAKRA (188 aa). C266 acts as the Nucleophile in catalysis. The L-glutamine site is built by L267, Q270, N308, G310, and F311. Catalysis depends on residues H350 and E352.

Belongs to the CarA family. As to quaternary structure, composed of two chains; the small (or glutamine) chain promotes the hydrolysis of glutamine to ammonia, which is used by the large (or ammonia) chain to synthesize carbamoyl phosphate. Tetramer of heterodimers (alpha,beta)4.

It carries out the reaction hydrogencarbonate + L-glutamine + 2 ATP + H2O = carbamoyl phosphate + L-glutamate + 2 ADP + phosphate + 2 H(+). It catalyses the reaction L-glutamine + H2O = L-glutamate + NH4(+). It participates in amino-acid biosynthesis; L-arginine biosynthesis; carbamoyl phosphate from bicarbonate: step 1/1. The protein operates within pyrimidine metabolism; UMP biosynthesis via de novo pathway; (S)-dihydroorotate from bicarbonate: step 1/3. Its function is as follows. Small subunit of the glutamine-dependent carbamoyl phosphate synthetase (CPSase). CPSase catalyzes the formation of carbamoyl phosphate from the ammonia moiety of glutamine, carbonate, and phosphate donated by ATP, constituting the first step of 2 biosynthetic pathways, one leading to arginine and/or urea and the other to pyrimidine nucleotides. The small subunit (glutamine amidotransferase) binds and cleaves glutamine to supply the large subunit with the substrate ammonia. This chain is Carbamoyl phosphate synthase small chain, found in Neisseria meningitidis serogroup A / serotype 4A (strain DSM 15465 / Z2491).